A 416-amino-acid polypeptide reads, in one-letter code: Prostacyclin receptor (416 aa).

Residues 1–45 (MVASGGRPDGPPSITPESPLIVGGREWQGMAGSCWNITYVQDSVG) lie on the Extracellular side of the membrane. 2 disulfide bridges follow: Cys34-Cys194 and Cys121-Cys199. N-linked (GlcNAc...) asparagine glycosylation occurs at Asn36. A helical transmembrane segment spans residues 46 to 67 (PATSTLMFVAGVVGNGLALGIL). Residues 68 to 80 (GARRRSHPSAFAV) are Cytoplasmic-facing. A helical membrane pass occupies residues 81–105 (LVTGLAVTDLLGTCFLSPAVFVAYA). At 106–123 (RNSSLLGLAHGGTMLCDT) the chain is on the extracellular side. The chain crosses the membrane as a helical span at residues 124–144 (FAFAMTFFGLASTLILFAMAV). Over 145–163 (ERCLALSHPYLYAQLDGPR) the chain is Cytoplasmic. A helical membrane pass occupies residues 164-187 (CARLALPAIYAFCCLFCSLPLLGL). The Extracellular segment spans residues 188-215 (GEHQQYCPGSWCFIRMRSPQPGGCAFSL). Residues 216-237 (AYASLMALLVTSIFFCNGSVTL) form a helical membrane-spanning segment. The Cytoplasmic segment spans residues 238-264 (SLCHMYRQQRRHHGSFVPTSRAREDEV). The helical transmembrane segment at 265–289 (YHLILLALMTGIMAVCSLPLTIRGF) threads the bilayer. At 290–302 (TQAIAPDSREMGD) the chain is on the extracellular side. The chain crosses the membrane as a helical span at residues 303 to 323 (LHAFRFNAFNPILDPWVFILF). Residues 324–416 (RKAVFQRLKF…TEAVVACSLC (93 aa)) lie on the Cytoplasmic side of the membrane. Ser366 is modified (phosphoserine). Residue Cys413 is modified to Cysteine methyl ester. The S-farnesyl cysteine moiety is linked to residue Cys413. Residues 414-416 (SLC) constitute a propeptide, removed in mature form.

It belongs to the G-protein coupled receptor 1 family. In terms of assembly, interacts (non-isoprenylated C-terminus) with PDZK1. In terms of processing, isoprenylation does not influence ligand binding but is required for efficient coupling to the effectors adenylyl cyclase and phospholipase C.

The protein localises to the cell membrane. Functionally, receptor for prostacyclin (prostaglandin I2 or PGI2). The activity of this receptor is mediated by G(s) proteins which activate adenylate cyclase. The polypeptide is Prostacyclin receptor (Ptgir) (Rattus norvegicus (Rat)).